Reading from the N-terminus, the 262-residue chain is Hydroxyethylthiazole kinase (262 aa).

Residue Met50 participates in substrate binding. Residues Arg125 and Thr171 each coordinate ATP. Gly198 contacts substrate.

Belongs to the Thz kinase family. Mg(2+) is required as a cofactor.

The catalysed reaction is 5-(2-hydroxyethyl)-4-methylthiazole + ATP = 4-methyl-5-(2-phosphooxyethyl)-thiazole + ADP + H(+). It functions in the pathway cofactor biosynthesis; thiamine diphosphate biosynthesis; 4-methyl-5-(2-phosphoethyl)-thiazole from 5-(2-hydroxyethyl)-4-methylthiazole: step 1/1. Catalyzes the phosphorylation of the hydroxyl group of 4-methyl-5-beta-hydroxyethylthiazole (THZ). This Escherichia coli (strain SMS-3-5 / SECEC) protein is Hydroxyethylthiazole kinase.